The primary structure comprises 96 residues: CRISPR-associated endoribonuclease Cas2 (96 aa).

Mg(2+) is bound at residue aspartate 8.

The protein belongs to the CRISPR-associated endoribonuclease Cas2 protein family. In terms of assembly, homodimer, forms a heterotetramer with a Cas1 homodimer. The cofactor is Mg(2+).

In terms of biological role, CRISPR (clustered regularly interspaced short palindromic repeat), is an adaptive immune system that provides protection against mobile genetic elements (viruses, transposable elements and conjugative plasmids). CRISPR clusters contain sequences complementary to antecedent mobile elements and target invading nucleic acids. CRISPR clusters are transcribed and processed into CRISPR RNA (crRNA). Functions as a ssRNA-specific endoribonuclease. Involved in the integration of spacer DNA into the CRISPR cassette. The chain is CRISPR-associated endoribonuclease Cas2 from Chlorobaculum tepidum (strain ATCC 49652 / DSM 12025 / NBRC 103806 / TLS) (Chlorobium tepidum).